Here is a 94-residue protein sequence, read N- to C-terminus: Small ribosomal subunit protein bS6 (94 aa).

Belongs to the bacterial ribosomal protein bS6 family.

Its function is as follows. Binds together with bS18 to 16S ribosomal RNA. The sequence is that of Small ribosomal subunit protein bS6 from Phytoplasma mali (strain AT).